Here is a 951-residue protein sequence, read N- to C-terminus: Pentatricopeptide repeat-containing protein At4g19220, mitochondrial (951 aa).

The N-terminal 63 residues, M1–P63, are a transit peptide targeting the mitochondrion. PPR repeat units lie at residues D121–K151, D152–F186, D187–G221, D222–R252, D253–A287, D288–P322, H325–R355, D356–V386, D392–S426, A428–R458, D459–E489, S496–D530, N531–T561, D563–R597, D599–S629, D634–S668, W669–E695, N697–A731, N732–N762, S763–N793, N799–K829, and V835–P865. Residues V870–R945 are type E motif.

Belongs to the PPR family. PCMP-E subfamily.

It is found in the mitochondrion. The polypeptide is Pentatricopeptide repeat-containing protein At4g19220, mitochondrial (PCMP-E2) (Arabidopsis thaliana (Mouse-ear cress)).